The sequence spans 250 residues: Triosephosphate isomerase (250 aa).

Residue 9-11 (NWK) coordinates substrate. The Electrophile role is filled by His95. Glu167 (proton acceptor) is an active-site residue. Substrate-binding positions include Gly173, Ser212, and 233–234 (GG).

It belongs to the triosephosphate isomerase family. As to quaternary structure, homodimer.

It is found in the cytoplasm. The catalysed reaction is D-glyceraldehyde 3-phosphate = dihydroxyacetone phosphate. The protein operates within carbohydrate biosynthesis; gluconeogenesis. It functions in the pathway carbohydrate degradation; glycolysis; D-glyceraldehyde 3-phosphate from glycerone phosphate: step 1/1. Functionally, involved in the gluconeogenesis. Catalyzes stereospecifically the conversion of dihydroxyacetone phosphate (DHAP) to D-glyceraldehyde-3-phosphate (G3P). This chain is Triosephosphate isomerase, found in Nitrosococcus oceani (strain ATCC 19707 / BCRC 17464 / JCM 30415 / NCIMB 11848 / C-107).